A 595-amino-acid chain; its full sequence is Aspartate--tRNA ligase (595 aa).

Glu180 lines the L-aspartate pocket. Positions 204–207 (QLFK) are aspartate. L-aspartate is bound at residue Arg226. ATP contacts are provided by residues 226 to 228 (RDE) and Gln235. Position 454 (His454) interacts with L-aspartate. An ATP-binding site is contributed by Glu488. Arg495 contributes to the L-aspartate binding site. 540–543 (GLDR) serves as a coordination point for ATP.

This sequence belongs to the class-II aminoacyl-tRNA synthetase family. Type 1 subfamily. As to quaternary structure, homodimer.

The protein localises to the cytoplasm. It catalyses the reaction tRNA(Asp) + L-aspartate + ATP = L-aspartyl-tRNA(Asp) + AMP + diphosphate. Catalyzes the attachment of L-aspartate to tRNA(Asp) in a two-step reaction: L-aspartate is first activated by ATP to form Asp-AMP and then transferred to the acceptor end of tRNA(Asp). This chain is Aspartate--tRNA ligase, found in Clostridium acetobutylicum (strain ATCC 824 / DSM 792 / JCM 1419 / IAM 19013 / LMG 5710 / NBRC 13948 / NRRL B-527 / VKM B-1787 / 2291 / W).